A 221-amino-acid polypeptide reads, in one-letter code: Ktr system potassium uptake protein C (221 aa).

Residues 2–118 (KKEFAVIGLG…LSKIGADHIV (117 aa)) enclose the RCK N-terminal domain. NAD(+) is bound by residues arginine 12, 32 to 34 (DID), 52 to 53 (DS), 74 to 76 (IGE), 99 to 101 (KAQ), histidine 105, and glutamate 121. Positions 135–219 (NNVLDYLELS…ISRFEKRVLH (85 aa)) constitute an RCK C-terminal domain.

The protein belongs to the KtrA potassium transport family. In terms of assembly, homodimer, tetramer (dimer of homodimer) and octamer (tetramer of homodimer). Part of the KtrCD complex formed by an octameric catalytic ring of KtrC and a membrane associated dimer of KtrD forming a potassium channel.

The protein resides in the cell membrane. Its function is as follows. Catalytic subunit of the KtrCD potassium uptake transporter. The 2 major potassium transporter complexes KtrAB and KtrCD confer resistance to both suddenly imposed and prolonged osmotic stress. In Bacillus subtilis (strain 168), this protein is Ktr system potassium uptake protein C (ktrC).